Reading from the N-terminus, the 117-residue chain is Large ribosomal subunit protein uL18 (117 aa).

It belongs to the universal ribosomal protein uL18 family. As to quaternary structure, part of the 50S ribosomal subunit; part of the 5S rRNA/L5/L18/L25 subcomplex. Contacts the 5S and 23S rRNAs.

This is one of the proteins that bind and probably mediate the attachment of the 5S RNA into the large ribosomal subunit, where it forms part of the central protuberance. In Leuconostoc citreum (strain KM20), this protein is Large ribosomal subunit protein uL18.